Consider the following 227-residue polypeptide: 4'-phosphopantetheinyl transferase PptT (227 aa).

Residues R48, R56, 75 to 78 (KGDK), 92 to 93 (TH), and D114 each bind CoA. Mg(2+) is bound by residues D114, A115, and E116. CoA contacts are provided by E157, K161, and L171.

This sequence belongs to the P-Pant transferase superfamily. Mg(2+) is required as a cofactor.

It catalyses the reaction apo-[ACP] + CoA = holo-[ACP] + adenosine 3',5'-bisphosphate + H(+). Inhibited by the amidino-urea compound 1-[(2,6-diethylphenyl)-3-N-ethylcarbamimodoyl]urea (compound 8918). It acts by binding to the phosphopantetheine pocket in the active site. Inhibition by compound 8918 kills M.tuberculosis. Transfers the 4'-phosphopantetheine moiety from coenzyme A to a Ser of acyl-carrier-protein. Involved in post-translational modification of various type-I polyketide synthases required for the formation of both mycolic acids and lipid virulence factors. Acts on Pks13, Mas, PpsA, PpsB, PpsC and PpsD. Also acts on AcpM, the meromycolate extension acyl carrier protein. In addition, is involved in the activation of the acyl carrier protein MbtL and the nonribosomal peptides synthases MbtB and MbtE, which are involved in the biosynthesis of the siderophore mycobactin. Its function is as follows. Required for the replication and survival of Mycobacterium during the acute and chronic phases of infection in mice. In Mycobacterium tuberculosis (strain ATCC 25618 / H37Rv), this protein is 4'-phosphopantetheinyl transferase PptT.